Consider the following 54-residue polypeptide: Putative collagen-like domain-containing protein 065L (54 aa).

A disordered region spans residues M1–F54. In terms of domain architecture, Collagen-like spans P7 to A51. The segment covering G26–G35 has biased composition (gly residues). Over residues P42–F54 the composition is skewed to low complexity.

This chain is Putative collagen-like domain-containing protein 065L, found in Dryophytes versicolor (chameleon treefrog).